Consider the following 272-residue polypeptide: Cytochrome c1 (272 aa).

The signal sequence occupies residues 1-24; the sequence is MTTIVKRALVAAGMVLAIGGAAQA. Positions 61, 64, 65, and 200 each coordinate heme c. Residues 244–261 traverse the membrane as a helical segment; it reads LGLKVLLFLGVLTAMLLA.

As to quaternary structure, the main subunits of complex b-c1 are: cytochrome b, cytochrome c1 and the Rieske protein. In terms of processing, binds 1 heme c group covalently per subunit.

Its subcellular location is the cell membrane. Component of the ubiquinol-cytochrome c reductase complex (complex III or cytochrome b-c1 complex), which is a respiratory chain that generates an electrochemical potential coupled to ATP synthesis. This Rhodospirillum rubrum protein is Cytochrome c1 (petC).